A 300-amino-acid polypeptide reads, in one-letter code: Polyamine aminopropyltransferase (300 aa).

The PABS domain maps to 4–237; sequence WHWHIEWQTP…GLWGFVYASD (234 aa). S-methyl-5'-thioadenosine is bound at residue Gln-33. His-64 and Glu-88 together coordinate spermidine. Residues Asp-108 and 140-141 contribute to the S-methyl-5'-thioadenosine site; that span reads DG. The active-site Proton acceptor is Asp-158. Residue Pro-167 participates in S-methyl-5'-thioadenosine binding.

Belongs to the spermidine/spermine synthase family. In terms of assembly, homodimer or homotetramer.

The protein resides in the cytoplasm. The enzyme catalyses S-adenosyl 3-(methylsulfanyl)propylamine + putrescine = S-methyl-5'-thioadenosine + spermidine + H(+). Its pathway is amine and polyamine biosynthesis; spermidine biosynthesis; spermidine from putrescine: step 1/1. Functionally, catalyzes the irreversible transfer of a propylamine group from the amino donor S-adenosylmethioninamine (decarboxy-AdoMet) to putrescine (1,4-diaminobutane) to yield spermidine. This chain is Polyamine aminopropyltransferase, found in Sulfurisphaera tokodaii (strain DSM 16993 / JCM 10545 / NBRC 100140 / 7) (Sulfolobus tokodaii).